Here is a 720-residue protein sequence, read N- to C-terminus: B3 domain-containing transcription factor ABI3 (720 aa).

Disordered regions lie at residues 122 to 146 (RSDG…SSGA) and 324 to 360 (FQQD…PPQQ). The span at 129 to 146 (TPNQNQYASGNCDDSSGA) shows a compositional bias: polar residues. Positions 324–344 (FQQDPFQNPNPNNNNLIPPSD) are enriched in low complexity. The segment at residues 572 to 674 (LQKVLKQSDV…KYLIRGVKVR (103 aa)) is a DNA-binding region (TF-B3). The segment at 675–720 (QPSGQKPEAPPSSAATKRQNKSQRNINNNSPSANVVVASPTSQTVK) is disordered. The segment covering 687–700 (SAATKRQNKSQRNI) has biased composition (polar residues). A compositionally biased stretch (low complexity) spans 701–714 (NNNSPSANVVVASP).

In terms of assembly, interacts (via C-terminus) with SPK1, SCAR3, ABI5, APRR1, AIP2, AIP3 and AIP4. Binds to BZIP10 and BZIP25 and forms complexes made of ABI3, BZIP53 and BZIP25 or BZIP10. In terms of processing, ubiquitinated by AIP2. Ubiquitination probably leads to its subsequent degradation, thus negatively regulating ABA signaling. Isoform 2 accumulates only at the end of seed maturation.

It localises to the nucleus. The protein resides in the cytoplasm. Functionally, participates in abscisic acid-regulated gene expression during seed development. Regulates the transcription of SGR1 and SGR2 that are involved in leaf and embryo degreening. The sequence is that of B3 domain-containing transcription factor ABI3 (ABI3) from Arabidopsis thaliana (Mouse-ear cress).